The following is a 491-amino-acid chain: Monodehydroascorbate reductase 5, chlorplastic (491 aa).

Residues 1-42 constitute a chloroplast transit peptide; sequence MASTAAAASSQGCISWALRQRGLGGGGARAVPVLPRRRFCVS. Residues 61-64, Glu88, Arg95, Lys100, and 194-195 each bind FAD; these read GGNA and RD. NAD(+) contacts are provided by residues 217–223, Glu241, Arg247, and Gly306; that span reads GGYIGME. 219 to 223 is an NADP(+) binding site; that stretch reads YIGME. Positions 247 and 306 each coordinate NADP(+). Asp344 is a binding site for FAD. 360–361 serves as a coordination point for NAD(+); that stretch reads EH. An NADP(+)-binding site is contributed by 360–361; sequence EH. Val362 provides a ligand contact to FAD. Residue Arg366 coordinates L-ascorbate. Tyr391 contacts FAD. An NAD(+)-binding site is contributed by Tyr391. Tyr391 provides a ligand contact to NADP(+). Arg393 serves as a coordination point for L-ascorbate.

It belongs to the FAD-dependent oxidoreductase family. FAD serves as cofactor.

The protein resides in the plastid. It is found in the chloroplast. It catalyses the reaction 2 monodehydro-L-ascorbate radical + NADH + H(+) = 2 L-ascorbate + NAD(+). In terms of biological role, catalyzes the conversion of monodehydroascorbate to ascorbate, oxidizing NADH in the process. Ascorbate is a major antioxidant against reactive oxygen species (ROS) and nitric oxide (NO). The chain is Monodehydroascorbate reductase 5, chlorplastic from Oryza sativa subsp. japonica (Rice).